We begin with the raw amino-acid sequence, 1081 residues long: Importin-4 (1081 aa).

The residue at position 1 (Met-1) is an N-acetylmethionine. Residues Ala-24 to Arg-90 form the Importin N-terminal domain. HEAT repeat units lie at residues Lys-348 to Asp-385, Arg-390 to Pro-427, Ser-431 to Pro-471, Pro-475 to Ala-513, Gln-895 to His-932, and Glu-936 to Thr-974.

It belongs to the importin beta family. In terms of assembly, found in a cytosolic complex with ASF1 (ASF1A or ASF1B) and histones H3 and H4.

It is found in the cytoplasm. The protein localises to the nucleus. Nuclear transport receptor that mediates nuclear import of proteins, such as histones, RPS3A, TNP2 and VDR. Serves as receptor for nuclear localization signals (NLS) in cargo substrates. Is thought to mediate docking of the importin/substrate complex to the nuclear pore complex (NPC) through binding to nucleoporin and the complex is subsequently translocated through the pore by an energy requiring, Ran-dependent mechanism. At the nucleoplasmic side of the NPC, Ran binds to the importin, the importin/substrate complex dissociates and importin is re-exported from the nucleus to the cytoplasm where GTP hydrolysis releases Ran. The directionality of nuclear import is thought to be conferred by an asymmetric distribution of the GTP- and GDP-bound forms of Ran between the cytoplasm and nucleus. Mediates the nuclear import of the histone H3-H4 dimer when in complex with ASF1 (ASF1A or ASF1B). Mediates the ligand-independent nuclear import of vitamin D receptor (VDR). In vitro, mediates the nuclear import of human cytomegalovirus UL84 by recognizing a non-classical NLS. The polypeptide is Importin-4 (IPO4) (Homo sapiens (Human)).